Here is a 309-residue protein sequence, read N- to C-terminus: Aspartate carbamoyltransferase catalytic subunit (309 aa).

2 residues coordinate carbamoyl phosphate: arginine 55 and threonine 56. Residue lysine 85 participates in L-aspartate binding. Carbamoyl phosphate is bound by residues arginine 106, histidine 135, and glutamine 138. L-aspartate-binding residues include arginine 168 and arginine 230. Carbamoyl phosphate is bound by residues leucine 268 and proline 269.

This sequence belongs to the aspartate/ornithine carbamoyltransferase superfamily. ATCase family. Heterododecamer (2C3:3R2) of six catalytic PyrB chains organized as two trimers (C3), and six regulatory PyrI chains organized as three dimers (R2).

It carries out the reaction carbamoyl phosphate + L-aspartate = N-carbamoyl-L-aspartate + phosphate + H(+). It functions in the pathway pyrimidine metabolism; UMP biosynthesis via de novo pathway; (S)-dihydroorotate from bicarbonate: step 2/3. In terms of biological role, catalyzes the condensation of carbamoyl phosphate and aspartate to form carbamoyl aspartate and inorganic phosphate, the committed step in the de novo pyrimidine nucleotide biosynthesis pathway. The sequence is that of Aspartate carbamoyltransferase catalytic subunit from Vibrio campbellii (strain ATCC BAA-1116).